A 503-amino-acid chain; its full sequence is Cytochrome P450 11B1, mitochondrial (503 aa).

Residues 1–24 (MALWAKARVWMAGPWLSLHRARPL) constitute a mitochondrion transit peptide. Cysteine 450 lines the heme pocket.

The protein belongs to the cytochrome P450 family. Requires heme as cofactor.

It is found in the mitochondrion inner membrane. It catalyses the reaction a steroid + 2 reduced [adrenodoxin] + O2 + 2 H(+) = an 11beta-hydroxysteroid + 2 oxidized [adrenodoxin] + H2O. The enzyme catalyses 11-deoxycortisol + 2 reduced [adrenodoxin] + O2 + 2 H(+) = cortisol + 2 oxidized [adrenodoxin] + H2O. The catalysed reaction is 21-hydroxyprogesterone + 2 reduced [adrenodoxin] + O2 + 2 H(+) = corticosterone + 2 oxidized [adrenodoxin] + H2O. It carries out the reaction corticosterone + 2 reduced [adrenodoxin] + O2 + 2 H(+) = 18-hydroxycorticosterone + 2 oxidized [adrenodoxin] + H2O. It catalyses the reaction 18-hydroxycorticosterone + 2 reduced [adrenodoxin] + O2 + 2 H(+) = aldosterone + 2 oxidized [adrenodoxin] + 2 H2O. The enzyme catalyses 21-hydroxyprogesterone + 2 reduced [adrenodoxin] + O2 + 2 H(+) = 19-hydroxy-11-deoxycorticosterone + 2 oxidized [adrenodoxin] + H2O. The catalysed reaction is 19-hydroxy-11-deoxycorticosterone + 2 reduced [adrenodoxin] + O2 + 2 H(+) = 19-oxo-11-deoxycorticosterone + 2 oxidized [adrenodoxin] + 2 H2O. Its pathway is steroid biosynthesis; glucocorticoid biosynthesis. The protein operates within steroid hormone biosynthesis. Its function is as follows. A cytochrome P450 monooxygenase that catalyzes the biosynthesis of aldosterone and other adrenal corticoids. Differing from other species (such as human, rat and mice), it is able to catalyze three sequential oxidative reactions of 11-deoxycorticosterone (21-hydroxyprogesterone), namely 11-beta hydroxylation, followed by two successive oxidations at C18 yielding 18-hydroxy and then 18-oxo intermediates, and ending with the formation of aldosterone. Steroid 11beta, 18- and 19-hydroxylase. Mechanistically, uses molecular oxygen inserting one oxygen atom into a substrate and reducing the second into a water molecule. Two electrons are provided by NADPH via a two-protein mitochondrial transfer system comprising flavoprotein FDXR (adrenodoxin/ferredoxin reductase) and nonheme iron-sulfur protein FDX1 or FDX2 (adrenodoxin/ferredoxin). The sequence is that of Cytochrome P450 11B1, mitochondrial (CYP11B1) from Ovis aries (Sheep).